We begin with the raw amino-acid sequence, 159 residues long: Urease accessory protein UreE (159 aa).

It belongs to the UreE family.

Its subcellular location is the cytoplasm. Its function is as follows. Involved in urease metallocenter assembly. Binds nickel. Probably functions as a nickel donor during metallocenter assembly. The sequence is that of Urease accessory protein UreE from Vibrio parahaemolyticus.